Reading from the N-terminus, the 229-residue chain is DNA mismatch repair protein MutH (229 aa).

It belongs to the MutH family.

Its subcellular location is the cytoplasm. Its function is as follows. Sequence-specific endonuclease that cleaves unmethylated GATC sequences. It is involved in DNA mismatch repair. The protein is DNA mismatch repair protein MutH of Shigella boydii serotype 18 (strain CDC 3083-94 / BS512).